Here is a 183-residue protein sequence, read N- to C-terminus: Translation initiation factor IF-3 (183 aa).

Belongs to the IF-3 family. As to quaternary structure, monomer.

It localises to the cytoplasm. IF-3 binds to the 30S ribosomal subunit and shifts the equilibrium between 70S ribosomes and their 50S and 30S subunits in favor of the free subunits, thus enhancing the availability of 30S subunits on which protein synthesis initiation begins. The chain is Translation initiation factor IF-3 from Pseudomonas entomophila (strain L48).